The chain runs to 1259 residues: Ankyrin repeat and sterile alpha motif domain-containing protein 1B (1259 aa).

ANK repeat units lie at residues 2 to 31 (GKDQELLEAARTGNVALVEKLLSGRKGGIL), 58 to 87 (SGYTALHHAALNGHKDIVLKLLQYEASTNV), 91 to 120 (KGYFPIHLAAWKGDVEIVKILIHHGPSHSR), 127 to 156 (ENETALHCAAQYGHSEVVAVLLEELTDPTI), 160 to 189 (KLETPLDLAALYGRLRVVKMIISAHPNLMS), 193 to 222 (RKHTPLHLAARNGHKAVVQVLLEAGMDVSC), and 225 to 254 (EKGSALHEAALFGKVDVVRVLLETGIDANI). The segment at 298-325 (HAQEDTAQETHLSSPAESPQKTKSETVT) is disordered. Residues 306–325 (ETHLSSPAESPQKTKSETVT) are compositionally biased toward polar residues. Phosphoserine is present on residues Ser310, Ser311, Ser315, Ser353, and Ser364. Disordered stretches follow at residues 367–401 (ELGKNGSQSVRTSSTINLSPGEVEDEEEDPNSCGP), 490–513 (PGTSHHRNSSTGPTPDCSPPSPDT), 556–614 (CTSF…GSSP), and 631–661 (TCEDGPDEASLANSPLPFKQTPIENNPEPSV). Positions 371-384 (NGSQSVRTSSTINL) are enriched in polar residues. Thr503 is modified (phosphothreonine). Phosphoserine is present on residues Ser507 and Ser510. Residues 556 to 574 (CTSFTSSPAASPPTSSVET) are compositionally biased toward low complexity. Residues 575–587 (TEVKNEGAEHADD) are compositionally biased toward basic and acidic residues. A Phosphoserine modification is found at Ser738. Positions 753–776 (VNWSKSSTAERSSKDNSERTPSFT) are disordered. At Thr772 the chain carries Phosphothreonine. Ser774 carries the phosphoserine modification. 2 consecutive SAM domains span residues 809 to 875 (CPVQ…LPKM) and 883 to 948 (YHPT…RLHD). A Phosphotyrosine modification is found at Tyr900. A short sequence motif (nuclear localization signal) is located at residue His934. The tract at residues 943–988 (GDRLHDDPPQKPPRSITLREPSGNHTPPQLSPSLSQSTYTTGGSLD) is disordered. A compositionally biased stretch (low complexity) spans 968–983 (TPPQLSPSLSQSTYTT). Residue Ser973 is modified to Phosphoserine. Phosphotyrosine is present on Tyr1006. Residues 1055–1212 (IFQSCDYKAF…SFENKPSKPI (158 aa)) form the PID domain. The interval 1196 to 1216 (HSSTLPESFENKPSKPIPKPR) is disordered.

As to quaternary structure, interacts with EPHA8. Isoform 2 interacts with COIL.

Its subcellular location is the cytoplasm. The protein localises to the nucleus. It is found in the postsynaptic density. It localises to the cell projection. The protein resides in the dendritic spine. Functionally, isoform 2 may participate in the regulation of nucleoplasmic coilin protein interactions in neuronal and transformed cells. This Mus musculus (Mouse) protein is Ankyrin repeat and sterile alpha motif domain-containing protein 1B (Anks1b).